Reading from the N-terminus, the 313-residue chain is NAD-capped RNA hydrolase NudC (313 aa).

R111 provides a ligand contact to substrate. The Nudix hydrolase domain occupies 168–293; that stretch reads PRIDPAVICL…DWSSASESKL (126 aa). The a divalent metal cation site is built by A202, E218, and E222. Positions 203–224 match the Nudix box motif; that stretch reads GFVEAGESFEVCVAREIREEIG. 236–243 lines the substrate pocket; it reads QPWPFPRS. A divalent metal cation is bound at residue E264.

This sequence belongs to the Nudix hydrolase family. NudC subfamily. As to quaternary structure, homodimer. Mg(2+) serves as cofactor. It depends on Mn(2+) as a cofactor.

The enzyme catalyses a 5'-end NAD(+)-phospho-ribonucleoside in mRNA + H2O = a 5'-end phospho-adenosine-phospho-ribonucleoside in mRNA + beta-nicotinamide D-ribonucleotide + 2 H(+). It carries out the reaction NAD(+) + H2O = beta-nicotinamide D-ribonucleotide + AMP + 2 H(+). The catalysed reaction is NADH + H2O = reduced beta-nicotinamide D-ribonucleotide + AMP + 2 H(+). Its function is as follows. mRNA decapping enzyme that specifically removes the nicotinamide adenine dinucleotide (NAD) cap from a subset of mRNAs by hydrolyzing the diphosphate linkage to produce nicotinamide mononucleotide (NMN) and 5' monophosphate mRNA. The NAD-cap is present at the 5'-end of some mRNAs and stabilizes RNA against 5'-processing. Has preference for mRNAs with a 5'-end purine. Catalyzes the hydrolysis of a broad range of dinucleotide pyrophosphates. This Mycobacterium bovis (strain ATCC BAA-935 / AF2122/97) protein is NAD-capped RNA hydrolase NudC.